The sequence spans 219 residues: MAPPSRHCLLLISTLGVFALNCFTKGQKNSTLIFTRENTIRNCSCSADIRDCDYSLANLMCNCKTVLPLAVERTSYNGHLTIWFTDTSALGHLLNFTLVQDLKLSLCSTNTLPTEYLAICGLKRLRINMEAKHPFPEQSLLIHSGGDSDSREKPMWLHKGWQPCMYISFLDMALFNRDSALKSYSIENVTSIANNFPDFSYFRTFPMPSNKSYVVTFIY.

Positions 1–19 (MAPPSRHCLLLISTLGVFA) are cleaved as a signal peptide. N-linked (GlcNAc...) asparagine glycosylation is found at Asn29, Asn42, Asn95, Asn188, and Asn210.

This sequence belongs to the EPCIP family. As to quaternary structure, homooligomer. Interacts with PKD1 (via the PKD repeats in the N-terminal extracellular region); the interaction is not dependent on N-glycosylation of either protein. Post-translationally, N-glycosylated. In terms of tissue distribution, detected in the kidney and in the endothelium of large blood vessels (at protein level).

The protein resides in the vesicle. The protein localises to the secreted. It localises to the extracellular exosome. In terms of biological role, likely to be involved with PKD1 in the detection, sequestration and exocytosis of senescent mitochondria. The chain is Exosomal polycystin-1-interacting protein from Homo sapiens (Human).